The sequence spans 155 residues: Ribosomal RNA large subunit methyltransferase H (155 aa).

S-adenosyl-L-methionine contacts are provided by residues leucine 73, glycine 104, and 123–128 (LSRMTF).

It belongs to the RNA methyltransferase RlmH family. As to quaternary structure, homodimer.

The protein resides in the cytoplasm. It carries out the reaction pseudouridine(1915) in 23S rRNA + S-adenosyl-L-methionine = N(3)-methylpseudouridine(1915) in 23S rRNA + S-adenosyl-L-homocysteine + H(+). Specifically methylates the pseudouridine at position 1915 (m3Psi1915) in 23S rRNA. The protein is Ribosomal RNA large subunit methyltransferase H of Methylococcus capsulatus (strain ATCC 33009 / NCIMB 11132 / Bath).